The primary structure comprises 430 residues: Enolase (430 aa).

Gln-166 lines the (2R)-2-phosphoglycerate pocket. Glu-208 functions as the Proton donor in the catalytic mechanism. Mg(2+)-binding residues include Asp-245, Glu-288, and Asp-315. 4 residues coordinate (2R)-2-phosphoglycerate: Lys-340, Arg-369, Ser-370, and Lys-391. The active-site Proton acceptor is the Lys-340.

The protein belongs to the enolase family. Mg(2+) is required as a cofactor.

Its subcellular location is the cytoplasm. The protein resides in the secreted. It localises to the cell surface. It carries out the reaction (2R)-2-phosphoglycerate = phosphoenolpyruvate + H2O. The protein operates within carbohydrate degradation; glycolysis; pyruvate from D-glyceraldehyde 3-phosphate: step 4/5. In terms of biological role, catalyzes the reversible conversion of 2-phosphoglycerate (2-PG) into phosphoenolpyruvate (PEP). It is essential for the degradation of carbohydrates via glycolysis. This chain is Enolase, found in Clostridium beijerinckii (strain ATCC 51743 / NCIMB 8052) (Clostridium acetobutylicum).